Reading from the N-terminus, the 129-residue chain is Aspartate 1-decarboxylase (129 aa).

Ser25 (schiff-base intermediate with substrate; via pyruvic acid) is an active-site residue. Ser25 is subject to Pyruvic acid (Ser). Thr57 provides a ligand contact to substrate. Tyr58 functions as the Proton donor in the catalytic mechanism. 73–75 serves as a coordination point for substrate; the sequence is GAA.

The protein belongs to the PanD family. Heterooctamer of four alpha and four beta subunits. Pyruvate is required as a cofactor. Post-translationally, is synthesized initially as an inactive proenzyme, which is activated by self-cleavage at a specific serine bond to produce a beta-subunit with a hydroxyl group at its C-terminus and an alpha-subunit with a pyruvoyl group at its N-terminus.

Its subcellular location is the cytoplasm. The enzyme catalyses L-aspartate + H(+) = beta-alanine + CO2. It participates in cofactor biosynthesis; (R)-pantothenate biosynthesis; beta-alanine from L-aspartate: step 1/1. Its function is as follows. Catalyzes the pyruvoyl-dependent decarboxylation of aspartate to produce beta-alanine. The polypeptide is Aspartate 1-decarboxylase (Chlorobium chlorochromatii (strain CaD3)).